The chain runs to 204 residues: Small ribosomal subunit protein uS3 (204 aa).

A KH type-2 domain is found at isoleucine 37 to lysine 105.

The protein belongs to the universal ribosomal protein uS3 family. Part of the 30S ribosomal subunit. Forms a tight complex with proteins S10 and S14.

Functionally, binds the lower part of the 30S subunit head. Binds mRNA in the 70S ribosome, positioning it for translation. In Wolbachia pipientis wMel, this protein is Small ribosomal subunit protein uS3.